Reading from the N-terminus, the 340-residue chain is Ferrochelatase (340 aa).

Residues histidine 189 and glutamate 292 each coordinate Fe cation.

The protein belongs to the ferrochelatase family.

The protein resides in the cytoplasm. The catalysed reaction is heme b + 2 H(+) = protoporphyrin IX + Fe(2+). Its pathway is porphyrin-containing compound metabolism; protoheme biosynthesis; protoheme from protoporphyrin-IX: step 1/1. Its function is as follows. Catalyzes the ferrous insertion into protoporphyrin IX. The protein is Ferrochelatase of Pseudomonas savastanoi pv. phaseolicola (strain 1448A / Race 6) (Pseudomonas syringae pv. phaseolicola (strain 1448A / Race 6)).